We begin with the raw amino-acid sequence, 220 residues long: UPF0711 protein C18orf21 (220 aa).

Residues 117-181 (SRSFVSTLKS…VSTCSSKNTS (65 aa)) form a disordered region. Polar residues predominate over residues 119 to 136 (SFVSTLKSNPATPTSKLS). Serine 126 carries the post-translational modification Phosphoserine. Phosphothreonine is present on residues threonine 130 and threonine 139. The span at 171–180 (SVSTCSSKNT) shows a compositional bias: low complexity.

Belongs to the UPF0711 family.

This chain is UPF0711 protein C18orf21 (C18orf21), found in Homo sapiens (Human).